The primary structure comprises 364 residues: Methylthioribose-1-phosphate isomerase (364 aa).

Catalysis depends on D254, which acts as the Proton donor.

Belongs to the eIF-2B alpha/beta/delta subunits family. MtnA subfamily.

The protein resides in the cytoplasm. Its subcellular location is the nucleus. It catalyses the reaction 5-(methylsulfanyl)-alpha-D-ribose 1-phosphate = 5-(methylsulfanyl)-D-ribulose 1-phosphate. It participates in amino-acid biosynthesis; L-methionine biosynthesis via salvage pathway; L-methionine from S-methyl-5-thio-alpha-D-ribose 1-phosphate: step 1/6. Functionally, catalyzes the interconversion of methylthioribose-1-phosphate (MTR-1-P) into methylthioribulose-1-phosphate (MTRu-1-P). This Drosophila erecta (Fruit fly) protein is Methylthioribose-1-phosphate isomerase.